Consider the following 445-residue polypeptide: UDP-N-acetylmuramoylalanine--D-glutamate ligase (445 aa).

117 to 123 provides a ligand contact to ATP; that stretch reads GSNGKTT.

This sequence belongs to the MurCDEF family.

Its subcellular location is the cytoplasm. The catalysed reaction is UDP-N-acetyl-alpha-D-muramoyl-L-alanine + D-glutamate + ATP = UDP-N-acetyl-alpha-D-muramoyl-L-alanyl-D-glutamate + ADP + phosphate + H(+). The protein operates within cell wall biogenesis; peptidoglycan biosynthesis. Cell wall formation. Catalyzes the addition of glutamate to the nucleotide precursor UDP-N-acetylmuramoyl-L-alanine (UMA). The chain is UDP-N-acetylmuramoylalanine--D-glutamate ligase from Neisseria meningitidis serogroup A / serotype 4A (strain DSM 15465 / Z2491).